Consider the following 92-residue polypeptide: uncharacterized protein (92 aa).

Positions 1-29 (MAAQTDYKKQVVGILLSLAFVLFVFSFSE) are cleaved as a signal peptide.

This is an uncharacterized protein from Bacillus subtilis (strain 168).